Here is a 256-residue protein sequence, read N- to C-terminus: 1-(5-phosphoribosyl)-5-[(5-phosphoribosylamino)methylideneamino] imidazole-4-carboxamide isomerase (256 aa).

The Proton acceptor role is filled by aspartate 8. Residue aspartate 129 is the Proton donor of the active site.

The protein belongs to the HisA/HisF family.

It localises to the cytoplasm. It carries out the reaction 1-(5-phospho-beta-D-ribosyl)-5-[(5-phospho-beta-D-ribosylamino)methylideneamino]imidazole-4-carboxamide = 5-[(5-phospho-1-deoxy-D-ribulos-1-ylimino)methylamino]-1-(5-phospho-beta-D-ribosyl)imidazole-4-carboxamide. The protein operates within amino-acid biosynthesis; L-histidine biosynthesis; L-histidine from 5-phospho-alpha-D-ribose 1-diphosphate: step 4/9. This Synechococcus sp. (strain WH7803) protein is 1-(5-phosphoribosyl)-5-[(5-phosphoribosylamino)methylideneamino] imidazole-4-carboxamide isomerase.